A 481-amino-acid chain; its full sequence is Rho GTPase-activating protein 15 (481 aa).

Phosphoserine occurs at positions 51, 111, 204, 207, and 249. Residues 87-197 (MVEKEGYLQK…WFQAIKNAID (111 aa)) form the PH domain. The Rho-GAP domain occupies 287–476 (SHLHTVCERE…FMLTEYDKIF (190 aa)).

It is found in the cytoplasm. Its subcellular location is the membrane. GTPase activator for the Rho-type GTPases by converting them to an inactive GDP-bound state. Has activity toward RAC1. Overexpression results in an increase in actin stress fibers and cell contraction. This chain is Rho GTPase-activating protein 15 (Arhgap15), found in Mus musculus (Mouse).